The sequence spans 465 residues: Cysteine--tRNA ligase (465 aa).

Cys-30 is a binding site for Zn(2+). The 'HIGH' region signature appears at 32-42 (ITVYDYCHVGH). Cys-214, His-239, and Glu-243 together coordinate Zn(2+). A 'KMSKS' region motif is present at residues 271-275 (KMSKS). Lys-274 provides a ligand contact to ATP.

The protein belongs to the class-I aminoacyl-tRNA synthetase family. In terms of assembly, monomer. Requires Zn(2+) as cofactor.

It localises to the cytoplasm. The catalysed reaction is tRNA(Cys) + L-cysteine + ATP = L-cysteinyl-tRNA(Cys) + AMP + diphosphate. The sequence is that of Cysteine--tRNA ligase from Burkholderia cenocepacia (strain ATCC BAA-245 / DSM 16553 / LMG 16656 / NCTC 13227 / J2315 / CF5610) (Burkholderia cepacia (strain J2315)).